The chain runs to 348 residues: Aldose 1-epimerase (348 aa).

Arg80 provides a ligand contact to substrate. Catalysis depends on His180, which acts as the Proton donor. Asp243 contacts substrate. Catalysis depends on Glu311, which acts as the Proton acceptor.

Belongs to the aldose epimerase family.

It carries out the reaction alpha-D-glucose = beta-D-glucose. The protein operates within carbohydrate metabolism; hexose metabolism. Mutarotase converts alpha-aldose to the beta-anomer. It is active on D-glucose, L-arabinose, D-xylose, D-galactose, maltose and lactose. This is Aldose 1-epimerase (galM) from Streptococcus thermophilus.